We begin with the raw amino-acid sequence, 103 residues long: Histone H4 (103 aa).

The segment covering 1–14 has biased composition (gly residues); that stretch reads MSGRGKGGKGLGKG. The segment at 1–20 is disordered; sequence MSGRGKGGKGLGKGGAKRHR. Position 2 is an N-acetylserine (serine 2). Lysine 17 carries the post-translational modification N6-acetyllysine. Residues 17–21 mediate DNA binding; sequence KRHRK. Position 21 is an N6-methyllysine (lysine 21).

The protein belongs to the histone H4 family. As to quaternary structure, the nucleosome is a histone octamer containing two molecules each of H2A, H2B, H3 and H4 assembled in one H3-H4 heterotetramer and two H2A-H2B heterodimers. The octamer wraps approximately 147 bp of DNA.

Its subcellular location is the nucleus. The protein localises to the chromosome. Its function is as follows. Core component of nucleosome. Nucleosomes wrap and compact DNA into chromatin, limiting DNA accessibility to the cellular machineries which require DNA as a template. Histones thereby play a central role in transcription regulation, DNA repair, DNA replication and chromosomal stability. DNA accessibility is regulated via a complex set of post-translational modifications of histones, also called histone code, and nucleosome remodeling. This chain is Histone H4, found in Pyrenomonas salina.